A 114-amino-acid polypeptide reads, in one-letter code: Iron-sulfur cluster insertion protein ErpA (114 aa).

Positions 42, 106, and 108 each coordinate iron-sulfur cluster.

The protein belongs to the HesB/IscA family. Homodimer. Requires iron-sulfur cluster as cofactor.

Required for insertion of 4Fe-4S clusters for at least IspG. This Proteus mirabilis (strain HI4320) protein is Iron-sulfur cluster insertion protein ErpA.